We begin with the raw amino-acid sequence, 1087 residues long: Fanconi-associated nuclease 1 homolog (1087 aa).

6 disordered regions span residues Met-1–Lys-79, Phe-104–Leu-154, Glu-169–Thr-202, Thr-459–Ile-486, Ile-816–Asn-835, and Ser-842–Ile-871. The span at Thr-41–Lys-79 shows a compositional bias: low complexity. A compositionally biased stretch (polar residues) spans Phe-104–Ile-115. Low complexity-rich tracts occupy residues Lys-118 to Leu-154, Asn-182 to Thr-202, and Asn-467 to Asn-485. Coiled coils occupy residues Trp-419–Asp-490 and Lys-830–Ile-874. Over residues Glu-848–Ile-871 the composition is skewed to acidic residues. Mn(2+) is bound by residues Glu-899, Asp-1023, Glu-1051, and Val-1052. Positions Asp-961–Lys-1083 constitute a VRR-NUC domain.

Belongs to the FAN1 family. It depends on Mn(2+) as a cofactor. The cofactor is Mg(2+).

It carries out the reaction Hydrolytically removes 5'-nucleotides successively from the 3'-hydroxy termini of 3'-hydroxy-terminated oligonucleotides.. Its function is as follows. Nuclease required for the repair of DNA interstrand cross-links (ICL). Acts as a 5'-3' exonuclease that anchors at a cut end of DNA and cleaves DNA successively at every third nucleotide, allowing to excise an ICL from one strand through flanking incisions. This is Fanconi-associated nuclease 1 homolog (mtmr15) from Dictyostelium discoideum (Social amoeba).